The sequence spans 312 residues: Glycine--tRNA ligase alpha subunit (312 aa).

It belongs to the class-II aminoacyl-tRNA synthetase family. In terms of assembly, tetramer of two alpha and two beta subunits.

The protein resides in the cytoplasm. It catalyses the reaction tRNA(Gly) + glycine + ATP = glycyl-tRNA(Gly) + AMP + diphosphate. The protein is Glycine--tRNA ligase alpha subunit of Methylobacillus flagellatus (strain ATCC 51484 / DSM 6875 / VKM B-1610 / KT).